The following is a 453-amino-acid chain: MSKISEAVKRARAAFSSGRTRPLQFRIQQLEALQRLIQEQEQELVGALAADLHKNEWNAYYEEVVYVLEEIEYMIQKLPEWAADEPVEKTPQTQQDELYIHSEPLGVVLVIGTWNYPFNLTIQPMVGAIAAGNSVVLKPSELSENMASLLATIIPQYLDKDLYPVINGGVPETTELLKERFDHILYTGSTGVGKIIMTAAAKHLTPVTLELGGKSPCYVDKNCDLDVACRRIAWGKFMNSGQTCVAPDYILCDPSIQNQIVEKLKKSLKEFYGEDAKKSRDYGRIISARHFQRVMGLIEGQKVAYGGTGDAATRYIAPTILTDVDPQSPVMQEEIFGPVLPIVCVRSLEEAIQFINQREKPLALYMFSSNDKVIKKMIAETSSGGVAANDVIVHITLHSLPFGGVGNSGMGSYHGKKSFETFSHRRSCLVRPLMNDEGLKVRYPPSPAKMTQH.

Ser2 carries the post-translational modification N-acetylserine. Lys178 is modified (N6-acetyllysine). 188–193 (GSTGVG) contributes to the NAD(+) binding site. Lys194 carries the N6-acetyllysine modification. Active-site residues include Glu210 and Cys244.

Belongs to the aldehyde dehydrogenase family. Homodimer. High levels in stomach, esophagus and lung; low level in the liver and kidney.

The protein resides in the cytoplasm. It catalyses the reaction an aldehyde + NAD(+) + H2O = a carboxylate + NADH + 2 H(+). The enzyme catalyses octanal + NAD(+) + H2O = octanoate + NADH + 2 H(+). In terms of biological role, ALDHs play a major role in the detoxification of alcohol-derived acetaldehyde. They are involved in the metabolism of corticosteroids, biogenic amines, neurotransmitters, and lipid peroxidation. Oxidizes medium and long chain aldehydes into non-toxic fatty acids. Preferentially oxidizes aromatic aldehyde substrates. Comprises about 50 percent of corneal epithelial soluble proteins. May play a role in preventing corneal damage caused by ultraviolet light. This chain is Aldehyde dehydrogenase, dimeric NADP-preferring (ALDH3A1), found in Homo sapiens (Human).